A 340-amino-acid polypeptide reads, in one-letter code: 4-hydroxythreonine-4-phosphate dehydrogenase (340 aa).

Substrate contacts are provided by histidine 141 and threonine 142. A divalent metal cation-binding residues include histidine 177, histidine 222, and histidine 277. 3 residues coordinate substrate: lysine 285, asparagine 294, and arginine 303.

Belongs to the PdxA family. In terms of assembly, homodimer. It depends on Zn(2+) as a cofactor. Mg(2+) is required as a cofactor. Co(2+) serves as cofactor.

It localises to the cytoplasm. It carries out the reaction 4-(phosphooxy)-L-threonine + NAD(+) = 3-amino-2-oxopropyl phosphate + CO2 + NADH. Its pathway is cofactor biosynthesis; pyridoxine 5'-phosphate biosynthesis; pyridoxine 5'-phosphate from D-erythrose 4-phosphate: step 4/5. In terms of biological role, catalyzes the NAD(P)-dependent oxidation of 4-(phosphooxy)-L-threonine (HTP) into 2-amino-3-oxo-4-(phosphooxy)butyric acid which spontaneously decarboxylates to form 3-amino-2-oxopropyl phosphate (AHAP). The protein is 4-hydroxythreonine-4-phosphate dehydrogenase of Maricaulis maris (strain MCS10) (Caulobacter maris).